The following is a 544-amino-acid chain: Terpene synthase 9 (544 aa).

Mg(2+)-binding residues include Asp-296, Asp-300, and Glu-449. The DDXXD motif motif lies at Asp-296 to Asp-300.

It belongs to the terpene synthase family. Tpsa subfamily. Mg(2+) serves as cofactor. Requires Mn(2+) as cofactor.

It carries out the reaction (2E,6E)-farnesyl diphosphate = (1E,4E)-germacrene B + diphosphate. The enzyme catalyses (2E)-geranyl diphosphate = terpinolene + diphosphate. The catalysed reaction is (2E)-geranyl diphosphate = limonene + diphosphate. It catalyses the reaction (2E)-geranyl diphosphate = beta-myrcene + diphosphate. It carries out the reaction (2Z,6Z)-farnesyl diphosphate = germacrene A + diphosphate. The enzyme catalyses (2Z,6Z)-farnesyl diphosphate = alpha-humulene + diphosphate. The protein operates within secondary metabolite biosynthesis; terpenoid biosynthesis. In terms of biological role, sesquiterpene synthase involved in the biosynthesis of volatile compounds. Mediates the conversion of (2E,6E)-farnesyl diphosphate (FPP) into (1E,4E)-germacrene B, but also smaller amounts of germacrene A and C, and of (2Z,6Z)-farnesyl diphosphate ((ZZ)-FPP) into alpha-humulene, germacrene A and germacrene B. Can act with a low efficiency as a monoterpene synthase with geranyl diphosphate (GPP) as substrate, thus producing beta-myrcene, limonene and terpinolene. The protein is Terpene synthase 9 of Solanum habrochaites (Wild tomato).